A 302-amino-acid chain; its full sequence is Oxaloacetate decarboxylase 2 (302 aa).

Ser50 serves as a coordination point for substrate. Residue Asp88 participates in Mg(2+) binding. Residues Arg159 and His235 each contribute to the substrate site.

Belongs to the isocitrate lyase/PEP mutase superfamily. Oxaloacetate decarboxylase family. Homotetramer; dimer of dimers. Mg(2+) serves as cofactor.

It carries out the reaction oxaloacetate + H(+) = pyruvate + CO2. Functionally, catalyzes the decarboxylation of oxaloacetate into pyruvate. Seems to play a role in maintaining cellular concentrations of bicarbonate and pyruvate. In Pseudomonas putida (strain W619), this protein is Oxaloacetate decarboxylase 2.